A 382-amino-acid chain; its full sequence is Processive diacylglycerol beta-glucosyltransferase (382 aa).

This sequence belongs to the glycosyltransferase 28 family. UgtP subfamily.

It is found in the cell membrane. It carries out the reaction a 1,2-diacyl-3-O-(beta-D-glucopyranosyl)-sn-glycerol + UDP-alpha-D-glucose = a 1,2-diacyl-3-O-(beta-D-Glc-(1-&gt;6)-beta-D-Glc)-sn-glycerol + UDP + H(+). It catalyses the reaction a 1,2-diacyl-3-O-(beta-D-Glc-(1-&gt;6)-beta-D-Glc)-sn-glycerol + UDP-alpha-D-glucose = a 1,2-diacyl-3-O-(beta-D-Glc-(1-&gt;6)-beta-D-Glc-(1-&gt;6)-beta-D-Glc)-sn-glycerol + UDP + H(+). The enzyme catalyses a 1,2-diacyl-sn-glycerol + UDP-alpha-D-glucose = a 1,2-diacyl-3-O-(beta-D-glucopyranosyl)-sn-glycerol + UDP + H(+). The protein operates within glycolipid metabolism; diglucosyl-diacylglycerol biosynthesis. In terms of biological role, processive glucosyltransferase involved in the biosynthesis of both the bilayer- and non-bilayer-forming membrane glucolipids. Is able to successively transfer up to three glucosyl residues to diacylglycerol (DAG), thereby catalyzing the formation of beta-monoglucosyl-DAG (3-O-(beta-D-glucopyranosyl)-1,2-diacyl-sn-glycerol), beta-diglucosyl-DAG (3-O-(beta-D-glucopyranosyl-beta-(1-&gt;6)-D-glucopyranosyl)-1,2-diacyl-sn-glycerol) and beta-triglucosyl-DAG (3-O-(beta-D-glucopyranosyl-beta-(1-&gt;6)-D-glucopyranosyl-beta-(1-&gt;6)-D-glucopyranosyl)-1,2-diacyl-sn-glycerol). Beta-diglucosyl-DAG is the predominant glycolipid found in Bacillales and is also used as a membrane anchor for lipoteichoic acid (LTA). Also seems to be able to form beta-tetraglucosyl-DAG, although this glycolipid has not been found in B.subtilis membrane. UgtP can only use UDP-glucose as sugar donor. The protein is Processive diacylglycerol beta-glucosyltransferase of Bacillus subtilis (strain 168).